Here is a 660-residue protein sequence, read N- to C-terminus: Bifunctional polymyxin resistance protein ArnA (660 aa).

The formyltransferase ArnAFT stretch occupies residues 1 to 304 (MKTVVFAYHD…TLGLVQGSRL (304 aa)). 86–88 (HLI) contributes to the (6R)-10-formyltetrahydrofolate binding site. The Proton donor; for formyltransferase activity role is filled by H104. Residues R114 and 136 to 140 (VKRAD) each bind (6R)-10-formyltetrahydrofolate. The tract at residues 314–660 (RRTRVLILGV…RTVDLTDKPS (347 aa)) is dehydrogenase ArnADH. NAD(+)-binding positions include D347 and 368-369 (DI). UDP-alpha-D-glucuronate-binding positions include A393, Y398, and 432 to 433 (TS). Residue E434 is the Proton acceptor; for decarboxylase activity of the active site. Residues R460, N492, 526 to 535 (KLIDGGKQKR), and Y613 contribute to the UDP-alpha-D-glucuronate site. R619 acts as the Proton donor; for decarboxylase activity in catalysis.

The protein in the N-terminal section; belongs to the Fmt family. UDP-L-Ara4N formyltransferase subfamily. In the C-terminal section; belongs to the NAD(P)-dependent epimerase/dehydratase family. UDP-glucuronic acid decarboxylase subfamily. As to quaternary structure, homohexamer, formed by a dimer of trimers.

The catalysed reaction is UDP-alpha-D-glucuronate + NAD(+) = UDP-beta-L-threo-pentopyranos-4-ulose + CO2 + NADH. It carries out the reaction UDP-4-amino-4-deoxy-beta-L-arabinose + (6R)-10-formyltetrahydrofolate = UDP-4-deoxy-4-formamido-beta-L-arabinose + (6S)-5,6,7,8-tetrahydrofolate + H(+). It participates in nucleotide-sugar biosynthesis; UDP-4-deoxy-4-formamido-beta-L-arabinose biosynthesis; UDP-4-deoxy-4-formamido-beta-L-arabinose from UDP-alpha-D-glucuronate: step 1/3. It functions in the pathway nucleotide-sugar biosynthesis; UDP-4-deoxy-4-formamido-beta-L-arabinose biosynthesis; UDP-4-deoxy-4-formamido-beta-L-arabinose from UDP-alpha-D-glucuronate: step 3/3. The protein operates within bacterial outer membrane biogenesis; lipopolysaccharide biosynthesis. Its function is as follows. Bifunctional enzyme that catalyzes the oxidative decarboxylation of UDP-glucuronic acid (UDP-GlcUA) to UDP-4-keto-arabinose (UDP-Ara4O) and the addition of a formyl group to UDP-4-amino-4-deoxy-L-arabinose (UDP-L-Ara4N) to form UDP-L-4-formamido-arabinose (UDP-L-Ara4FN). The modified arabinose is attached to lipid A and is required for resistance to polymyxin and cationic antimicrobial peptides. The polypeptide is Bifunctional polymyxin resistance protein ArnA (Escherichia coli (strain SE11)).